Reading from the N-terminus, the 165-residue chain is Small ribosomal subunit protein eS10 (165 aa).

Positions 92–165 are disordered; the sequence is ATLRRSRPET…FGRGRGQAPQ (74 aa). Residues 97–128 are compositionally biased toward basic and acidic residues; it reads SRPETGRPRPKGLEGERPPRLPRGETDRDTYR. Residues 142–153 show a composition bias toward low complexity; sequence AGAGAATEFQFR. Gly residues predominate over residues 154–165; sequence GGFGRGRGQAPQ.

The protein belongs to the eukaryotic ribosomal protein eS10 family. As to quaternary structure, component of the small ribosomal subunit.

It localises to the cytoplasm. The protein resides in the nucleus. Its subcellular location is the nucleolus. In terms of biological role, component of the 40S ribosomal subunit. The ribosome is a large ribonucleoprotein complex responsible for the synthesis of proteins in the cell. This Xenopus laevis (African clawed frog) protein is Small ribosomal subunit protein eS10 (rps10).